The following is a 206-amino-acid chain: Ribosomal RNA small subunit methyltransferase G (206 aa).

S-adenosyl-L-methionine-binding positions include Gly-73, Leu-78, 124 to 125 (VE), and Arg-139.

The protein belongs to the methyltransferase superfamily. RNA methyltransferase RsmG family.

Its subcellular location is the cytoplasm. The catalysed reaction is guanosine(527) in 16S rRNA + S-adenosyl-L-methionine = N(7)-methylguanosine(527) in 16S rRNA + S-adenosyl-L-homocysteine. Its function is as follows. Specifically methylates the N7 position of guanine in position 527 of 16S rRNA. The polypeptide is Ribosomal RNA small subunit methyltransferase G (Pectobacterium atrosepticum (strain SCRI 1043 / ATCC BAA-672) (Erwinia carotovora subsp. atroseptica)).